Here is a 155-residue protein sequence, read N- to C-terminus: NADPH-dependent 7-cyano-7-deazaguanine reductase (155 aa).

Residue C53 is the Thioimide intermediate of the active site. D60 acts as the Proton donor in catalysis. Substrate-binding positions include 75-77 (VES) and 94-95 (HE).

It belongs to the GTP cyclohydrolase I family. QueF type 1 subfamily.

It localises to the cytoplasm. The enzyme catalyses 7-aminomethyl-7-carbaguanine + 2 NADP(+) = 7-cyano-7-deazaguanine + 2 NADPH + 3 H(+). Its pathway is tRNA modification; tRNA-queuosine biosynthesis. Catalyzes the NADPH-dependent reduction of 7-cyano-7-deazaguanine (preQ0) to 7-aminomethyl-7-deazaguanine (preQ1). In Brucella abortus (strain S19), this protein is NADPH-dependent 7-cyano-7-deazaguanine reductase.